A 430-amino-acid chain; its full sequence is Trigger factor (430 aa).

Positions Gly157–Pro242 constitute a PPIase FKBP-type domain.

It belongs to the FKBP-type PPIase family. Tig subfamily.

It is found in the cytoplasm. The enzyme catalyses [protein]-peptidylproline (omega=180) = [protein]-peptidylproline (omega=0). Its function is as follows. Involved in protein export. Acts as a chaperone by maintaining the newly synthesized protein in an open conformation. Functions as a peptidyl-prolyl cis-trans isomerase. This is Trigger factor from Xanthomonas euvesicatoria pv. vesicatoria (strain 85-10) (Xanthomonas campestris pv. vesicatoria).